Reading from the N-terminus, the 251-residue chain is MAEQKKYLLFLATPDSEFAKKTYGGYHNVFVSLLGDEGEQWDSFRVVDGEFPEEKDLEKYEGFVISGSSHDAFQDTDWILKLCDIIKKLDDMNKKVLGICFGHQLIARAKGGKVARARKGPELCLGNITIVKEAVMPENYFGEEVPANLRIIKCHQDEVLELPENAKLLAYSSMYEVEMYSIKDNFLCIQGHPEYNRDILFDIIDRVLAGGHIKQNFAETSKATMEKNEADRKFWQKICKNFLKRQPSLLV.

Residues 16–213 (SEFAKKTYGG…IDRVLAGGHI (198 aa)) form the Glutamine amidotransferase type-1 domain. C100 serves as the catalytic Nucleophile. Residues H192 and E194 contribute to the active site.

This sequence belongs to the peptidase C26 family.

The protein resides in the cytoplasm. It localises to the cytosol. The protein operates within secondary metabolite biosynthesis. Involved in glucosinolate biosynthesis. Hydrolyzes the gamma-glutamyl peptide bond of several glutathione (GSH) conjugates to produce Cys-Gly conjugates related to glucosinolates. The gamma-Glu-Cys-Gly-GSH conjugates are the sulfur-donating molecule in glucosinolate biosynthesis. The chain is Gamma-glutamyl peptidase 4 from Arabidopsis thaliana (Mouse-ear cress).